The sequence spans 657 residues: tRNA 5-methylaminomethyl-2-thiouridine biosynthesis bifunctional protein MnmC (657 aa).

The segment at 1–239 (MTDRIVPATL…KRAMLVGEFA (239 aa)) is tRNA (mnm(5)s(2)U34)-methyltransferase. The tract at residues 263–657 (IGAGLAGCAV…VRALRHGRVA (395 aa)) is FAD-dependent cmnm(5)s(2)U34 oxidoreductase.

This sequence in the N-terminal section; belongs to the methyltransferase superfamily. tRNA (mnm(5)s(2)U34)-methyltransferase family. The protein in the C-terminal section; belongs to the DAO family. FAD is required as a cofactor.

The protein resides in the cytoplasm. The enzyme catalyses 5-aminomethyl-2-thiouridine(34) in tRNA + S-adenosyl-L-methionine = 5-methylaminomethyl-2-thiouridine(34) in tRNA + S-adenosyl-L-homocysteine + H(+). Functionally, catalyzes the last two steps in the biosynthesis of 5-methylaminomethyl-2-thiouridine (mnm(5)s(2)U) at the wobble position (U34) in tRNA. Catalyzes the FAD-dependent demodification of cmnm(5)s(2)U34 to nm(5)s(2)U34, followed by the transfer of a methyl group from S-adenosyl-L-methionine to nm(5)s(2)U34, to form mnm(5)s(2)U34. The polypeptide is tRNA 5-methylaminomethyl-2-thiouridine biosynthesis bifunctional protein MnmC (Burkholderia mallei (strain SAVP1)).